A 342-amino-acid chain; its full sequence is MVMNKQIVLNNYINGSLKQSDLALRTSTICMEIPDGCNGAILVKNLYLSVNPYLILRMGKLDIPQFDSILPGSTIVSYGVSKVLDSTHPSYEKGELIWGSQAGWEEYTLIQNPYNLFKIQDKDVPLSYYVGILGMPGMTAYAGFFEICSPKKGETVFVTAAAGSVGQLVGQFAKMFGCYVVGSAGSKEKVDLLKNKFGFDDAFNYKEESDYDTALKRHFPEGIDIYFDNVGGKMLEAVINNMRVHGRIAVCGMVSQYSLKQPEGVHNLLKLIPKQIRMQGFVVVDYYHLYPKFLEMVLPRIKEGKVTYVEDISEGLESAPSALLGVYVGRNVGNQVVAVSRE.

NADP(+) is bound by residues 163-166 (GSVG), lysine 189, tyrosine 205, asparagine 229, 251-257 (CGMVSQY), 281-283 (FVV), and asparagine 331.

The protein belongs to the NADP-dependent oxidoreductase L4BD family.

The protein resides in the cytoplasm. The enzyme catalyses (2R,5R)-isomenthone + NADP(+) = (R)-pulegone + NADPH + H(+). The catalysed reaction is (1R,4S)-menthone + NADP(+) = (R)-pulegone + NADPH + H(+). It participates in secondary metabolite biosynthesis; terpenoid biosynthesis. With respect to regulation, not inhibited by (+)-menthofuran. Functionally, monoterpene synthase that catalyzes the specific reduction of the 4,8-double bond of (+)-pulegone to produce both (-)-menthone and (+)-isomenthone in a 70:30 ratio. Unable to utilize either (-)-isopiperitenone or (+)-cis-isopulegone, or to catalyze the reverse reaction with (-)-menthone or (+)-isomenthone. Has an absolute requirement for NADPH. The protein is (+)-pulegone reductase of Mentha piperita (Peppermint).